The chain runs to 521 residues: MAKISRALISVSDKTGIVDFSKELAGYGVEILSTGGTAKLLREAGLAVKDVSEFTGFPEMLDGRVKTLHPKVHGGLLGMRGNSEHVATMKAHGIEPIDMVVVNLYPFEATVAKPDCSLEDAIENIDIGGPTMLRSAAKNNADVTVLVDHNDYRKVLDEMKQSGGAVSSATNFGLAVKVYQHTAAYDGAISNWLGARTGEGVAEYPDTLTFQFKKAQGMRYGENPHQSAAFYVERDVKEASIATALQLQGKELSYNNIGDTDAALECIKQFNEGPACVIVKHANPCGVAIGANLLDAYDRAYKTDPESAFGGIIAFNGELDEAAAKAIVDRQFVEVIIAPKVSAKASEIVAAKKNVRLLQCGQWQAESLARLDMKRVNGGLLVQQTDLSLHGELKVVTKRQPTEKEMIDLLFTWRVAKFVKSNAIVYGKDGMTIGVGAGQMSRVNSARIAAIKAEHAGLQVAGAVMASDAFFPFRDGIDNAAQVGITAVIQPGGSMRDEEVIAAADEHGMAMVFTSMRHFRH.

The MGS-like domain occupies 1 to 147; that stretch reads MAKISRALIS…KNNADVTVLV (147 aa).

Belongs to the PurH family.

The catalysed reaction is (6R)-10-formyltetrahydrofolate + 5-amino-1-(5-phospho-beta-D-ribosyl)imidazole-4-carboxamide = 5-formamido-1-(5-phospho-D-ribosyl)imidazole-4-carboxamide + (6S)-5,6,7,8-tetrahydrofolate. It carries out the reaction IMP + H2O = 5-formamido-1-(5-phospho-D-ribosyl)imidazole-4-carboxamide. The protein operates within purine metabolism; IMP biosynthesis via de novo pathway; 5-formamido-1-(5-phospho-D-ribosyl)imidazole-4-carboxamide from 5-amino-1-(5-phospho-D-ribosyl)imidazole-4-carboxamide (10-formyl THF route): step 1/1. It functions in the pathway purine metabolism; IMP biosynthesis via de novo pathway; IMP from 5-formamido-1-(5-phospho-D-ribosyl)imidazole-4-carboxamide: step 1/1. The protein is Bifunctional purine biosynthesis protein PurH of Geotalea daltonii (strain DSM 22248 / JCM 15807 / FRC-32) (Geobacter daltonii).